The chain runs to 426 residues: Phosphomethylpyrimidine synthase (426 aa).

Substrate-binding positions include N65, M94, Y123, H162, 184–186, 225–228, and E264; these read SRG and DGMR. H268 serves as a coordination point for Zn(2+). Substrate is bound at residue Y291. H332 serves as a coordination point for Zn(2+). C408, C411, and C415 together coordinate [4Fe-4S] cluster.

Belongs to the ThiC family. Requires [4Fe-4S] cluster as cofactor.

It catalyses the reaction 5-amino-1-(5-phospho-beta-D-ribosyl)imidazole + S-adenosyl-L-methionine = 4-amino-2-methyl-5-(phosphooxymethyl)pyrimidine + CO + 5'-deoxyadenosine + formate + L-methionine + 3 H(+). It functions in the pathway cofactor biosynthesis; thiamine diphosphate biosynthesis. Functionally, catalyzes the synthesis of the hydroxymethylpyrimidine phosphate (HMP-P) moiety of thiamine from aminoimidazole ribotide (AIR) in a radical S-adenosyl-L-methionine (SAM)-dependent reaction. In Methanococcus maripaludis (strain DSM 14266 / JCM 13030 / NBRC 101832 / S2 / LL), this protein is Phosphomethylpyrimidine synthase.